Here is a 443-residue protein sequence, read N- to C-terminus: Ribosomal protein uS12 methylthiotransferase RimO (443 aa).

The MTTase N-terminal domain maps to 8–118 (PKVGFVSLGC…VVNAVHEVVP (111 aa)). The [4Fe-4S] cluster site is built by cysteine 17, cysteine 53, cysteine 82, cysteine 151, cysteine 155, and cysteine 158. In terms of domain architecture, Radical SAM core spans 137 to 375 (LTPRHYAYLK…MAHQQAISTA (239 aa)). The TRAM domain occupies 378-443 (QLRIGKEIEV…DEYDMWAEPI (66 aa)).

It belongs to the methylthiotransferase family. RimO subfamily. It depends on [4Fe-4S] cluster as a cofactor.

Its subcellular location is the cytoplasm. The enzyme catalyses L-aspartate(89)-[ribosomal protein uS12]-hydrogen + (sulfur carrier)-SH + AH2 + 2 S-adenosyl-L-methionine = 3-methylsulfanyl-L-aspartate(89)-[ribosomal protein uS12]-hydrogen + (sulfur carrier)-H + 5'-deoxyadenosine + L-methionine + A + S-adenosyl-L-homocysteine + 2 H(+). Functionally, catalyzes the methylthiolation of an aspartic acid residue of ribosomal protein uS12. The protein is Ribosomal protein uS12 methylthiotransferase RimO of Pseudomonas putida (strain GB-1).